A 399-amino-acid chain; its full sequence is Subtilisin-like protease 1 (399 aa).

The N-terminal stretch at 1–19 (MGVFRFISISLAAVSAANA) is a signal peptide. Positions 20-116 (AQILSMPHAQ…VEPDTIISVH (97 aa)) are excised as a propeptide. In terms of domain architecture, Inhibitor I9 spans 34–115 (SYIVMMKDDT…FVEPDTIISV (82 aa)). Residues 126–399 (SWGLARISNP…TNVLINNGGA (274 aa)) form the Peptidase S8 domain. Residues Asp-158 and His-190 each act as charge relay system in the active site. A disordered region spans residues 175 to 198 (GSNQVNDGDDRDGSGHGTHTSGTM). The N-linked (GlcNAc...) asparagine glycan is linked to Asn-251. The segment covering 282–294 (NDNQDAQSSSPAS) has biased composition (polar residues). The tract at residues 282-312 (NDNQDAQSSSPASEPSVCTVGSSAEDDSRSS) is disordered. The active-site Charge relay system is the Ser-345.

It belongs to the peptidase S8 family.

It localises to the secreted. Its function is as follows. Secreted subtilisin-like serine protease with keratinolytic activity that contributes to pathogenicity. In Arthroderma benhamiae (Trichophyton mentagrophytes), this protein is Subtilisin-like protease 1 (SUB1).